A 375-amino-acid polypeptide reads, in one-letter code: Fructose-1,6-bisphosphate aldolase/phosphatase (375 aa).

Asp-15 acts as the Proton acceptor; for FBP phosphatase activity in catalysis. Asp-15, His-22, Asp-56, and Asp-57 together coordinate Mg(2+). His-22 serves as a coordination point for beta-D-fructose 1,6-bisphosphate. Residue His-22 participates in dihydroxyacetone phosphate binding. Residue Tyr-94 coordinates beta-D-fructose 1,6-bisphosphate. Gln-98 contributes to the Mg(2+) binding site. 107–108 is a beta-D-fructose 1,6-bisphosphate binding site; sequence GN. Position 135 (Asp-135) interacts with Mg(2+). Residue Lys-136 participates in beta-D-fructose 1,6-bisphosphate binding. Lys-136 contributes to the dihydroxyacetone phosphate binding site. The Proton donor/acceptor; for FBP aldolase activity role is filled by Tyr-237. Lys-240, Asp-241, and Asp-242 together coordinate Mg(2+). The Schiff-base intermediate with DHAP; for FBP aldolase activity role is filled by Lys-240. Beta-D-fructose 1,6-bisphosphate contacts are provided by residues 250–251, Arg-274, Asp-295, and Tyr-357; that span reads QS. The dihydroxyacetone phosphate site is built by Arg-274 and Asp-295.

The protein belongs to the FBP aldolase/phosphatase family. As to quaternary structure, homooctamer; dimer of tetramers. It depends on Mg(2+) as a cofactor.

It catalyses the reaction beta-D-fructose 1,6-bisphosphate + H2O = beta-D-fructose 6-phosphate + phosphate. It carries out the reaction beta-D-fructose 1,6-bisphosphate = D-glyceraldehyde 3-phosphate + dihydroxyacetone phosphate. The protein operates within carbohydrate biosynthesis; gluconeogenesis. Activity is enhanced by dithioerythritol, and is slightly inhibited by fructose 2,6-bisphosphate. AMP does not inhibit the enzyme activity. Functionally, catalyzes two subsequent steps in gluconeogenesis: the aldol condensation of dihydroxyacetone phosphate (DHAP) and glyceraldehyde-3-phosphate (GA3P) to fructose-1,6-bisphosphate (FBP), and the dephosphorylation of FBP to fructose-6-phosphate (F6P). Does not display hydrolase activity against fructose 2,6-bisphosphate, fructose 6-phosphate, fructose 1-phosphate, glucose 6-phosphate, and glucose 1-phosphate. Exhibits only negligible activity on inositol-1-phosphate (IMP). Is essential for the growth of T.kodakaraensis under gluconeogenic conditions. The chain is Fructose-1,6-bisphosphate aldolase/phosphatase from Thermococcus kodakarensis (strain ATCC BAA-918 / JCM 12380 / KOD1) (Pyrococcus kodakaraensis (strain KOD1)).